The sequence spans 219 residues: Nuclear transcription factor Y subunit B-8 (219 aa).

A disordered region spans residues 1–26 (MPDSDNDSGGPSNYAGGELSSPREQD). Residues 29–35 (LPIANVS) mediate DNA binding. The subunit association domain (SAD) stretch occupies residues 56–67 (VQECVSEFISFI). The span at 119-134 (AAASTTGAGTSAASTT) shows a compositional bias: low complexity. 2 disordered regions span residues 119 to 142 (AAAS…QHTA) and 166 to 219 (GQPM…NRGA). Residues 190 to 206 (GGRGGFGHHPGGGGGGS) are compositionally biased toward gly residues.

Belongs to the NFYB/HAP3 subunit family. As to quaternary structure, heterotrimeric transcription factor composed of three components, NF-YA, NF-YB and NF-YC. NF-YB and NF-YC must interact and dimerize for NF-YA association and DNA binding. Interacts with NFYC2, NFYC4 and NFYC6.

Its subcellular location is the cytoplasm. Component of the NF-Y/HAP transcription factor complex. The protein is Nuclear transcription factor Y subunit B-8 of Oryza sativa subsp. japonica (Rice).